A 551-amino-acid polypeptide reads, in one-letter code: MFS efflux transporter aclA (551 aa).

A run of 8 helical transmembrane segments spans residues 26–46 (WAVF…ITAI), 64–84 (VWIA…IGQI), 93–113 (PMII…GATS), 125–145 (GLGA…LVPL), 154–174 (IALS…GALV), 181–201 (WVFY…VLCL), 220–240 (WVGN…LVIG), and 251–271 (VLVP…FEAS). Asn-286 carries an N-linked (GlcNAc...) asparagine glycan. The next 6 membrane-spanning stretches (helical) occupy residues 294 to 314 (VLAF…TLFF), 327 to 347 (VDVI…GAIM), 356 to 376 (LHWA…TWDA), 385 to 405 (ILQC…LPAI), 420 to 440 (AYAF…AVVF), and 492 to 512 (LRTV…LVVV).

Belongs to the major facilitator superfamily.

It localises to the membrane. Functionally, MFS efflux transporter; part of the gene cluster that mediates the biosynthesis of aspirochlorine (or antibiotic A30641), an unusual halogenated spiro compound with distinctive antifungal properties due to selective inhibition of protein biosynthesis, and which is also active against bacteria, viruses, and murine tumor cells. The protein is MFS efflux transporter aclA of Aspergillus oryzae (strain ATCC 42149 / RIB 40) (Yellow koji mold).